Consider the following 153-residue polypeptide: Myosin regulatory light chain, smooth muscle (153 aa).

EF-hand domains are found at residues 12 to 47, 81 to 116, and 117 to 152; these read SQIQ…LGRG, DPEE…QADR, and FSQS…GQEE. Ca(2+) contacts are provided by D25, N27, D29, and D36.

In terms of biological role, in molluscan muscle, calcium regulation is associated with myosin rather than with actin. Muscle myosin contains two types of light chains: the catalytic light chain, essential for ATPase activity, and the regulatory light chain, a calcium-binding protein responsible for Ca(2+) dependent binding and Ca(2+) dependent Mg-ATPase activity. This Halocynthia roretzi (Sea squirt) protein is Myosin regulatory light chain, smooth muscle.